The following is a 731-amino-acid chain: Inducible ornithine decarboxylase (731 aa).

Lys-356 bears the N6-(pyridoxal phosphate)lysine mark.

This sequence belongs to the Orn/Lys/Arg decarboxylase class-I family. Dodecamer. The cofactor is pyridoxal 5'-phosphate.

The enzyme catalyses L-ornithine + H(+) = putrescine + CO2. The sequence is that of Inducible ornithine decarboxylase (odcI) from Lactobacillus sp. (strain 30a).